The sequence spans 357 residues: UDP-3-O-acylglucosamine N-acyltransferase (357 aa).

The Proton acceptor role is filled by His-251.

Belongs to the transferase hexapeptide repeat family. LpxD subfamily. In terms of assembly, homotrimer.

It catalyses the reaction a UDP-3-O-[(3R)-3-hydroxyacyl]-alpha-D-glucosamine + a (3R)-hydroxyacyl-[ACP] = a UDP-2-N,3-O-bis[(3R)-3-hydroxyacyl]-alpha-D-glucosamine + holo-[ACP] + H(+). It participates in bacterial outer membrane biogenesis; LPS lipid A biosynthesis. In terms of biological role, catalyzes the N-acylation of UDP-3-O-acylglucosamine using 3-hydroxyacyl-ACP as the acyl donor. Is involved in the biosynthesis of lipid A, a phosphorylated glycolipid that anchors the lipopolysaccharide to the outer membrane of the cell. In Ralstonia pickettii (strain 12J), this protein is UDP-3-O-acylglucosamine N-acyltransferase.